The sequence spans 159 residues: Trafficking protein particle complex subunit 6A (159 aa).

Serine 33 carries the post-translational modification Phosphoserine.

Belongs to the TRAPP small subunits family. BET3 subfamily. Part of the multisubunit transport protein particle (TRAPP) complex. Heterodimer with TRAPPC3. The heterodimer TRAPPC3-TRAPPC6A interacts with TRAPPC2L. Interacts with TRAPPC2L. As to expression, ubiquitous, with lowest expression in skeletal muscle and brain and highest in kidney, liver and testis, as well as in cultured melanocytes.

The protein resides in the golgi apparatus. It localises to the cis-Golgi network. The protein localises to the endoplasmic reticulum. Its function is as follows. May play a role in vesicular transport during the biogenesis of melanosomes. This chain is Trafficking protein particle complex subunit 6A, found in Mus musculus (Mouse).